Consider the following 179-residue polypeptide: Large ribosomal subunit protein uL5 (179 aa).

It belongs to the universal ribosomal protein uL5 family. In terms of assembly, part of the 50S ribosomal subunit; part of the 5S rRNA/L5/L18/L25 subcomplex. Contacts the 5S rRNA and the P site tRNA. Forms a bridge to the 30S subunit in the 70S ribosome.

Functionally, this is one of the proteins that bind and probably mediate the attachment of the 5S RNA into the large ribosomal subunit, where it forms part of the central protuberance. In the 70S ribosome it contacts protein S13 of the 30S subunit (bridge B1b), connecting the 2 subunits; this bridge is implicated in subunit movement. Contacts the P site tRNA; the 5S rRNA and some of its associated proteins might help stabilize positioning of ribosome-bound tRNAs. This Geotalea uraniireducens (strain Rf4) (Geobacter uraniireducens) protein is Large ribosomal subunit protein uL5.